A 314-amino-acid polypeptide reads, in one-letter code: tRNA-cytidine(32) 2-sulfurtransferase (314 aa).

Residues 46-51 (SGGKDS) carry the PP-loop motif motif. 3 residues coordinate [4Fe-4S] cluster: Cys-121, Cys-124, and Cys-212.

Belongs to the TtcA family. Homodimer. It depends on Mg(2+) as a cofactor. [4Fe-4S] cluster serves as cofactor.

The protein localises to the cytoplasm. The enzyme catalyses cytidine(32) in tRNA + S-sulfanyl-L-cysteinyl-[cysteine desulfurase] + AH2 + ATP = 2-thiocytidine(32) in tRNA + L-cysteinyl-[cysteine desulfurase] + A + AMP + diphosphate + H(+). The protein operates within tRNA modification. In terms of biological role, catalyzes the ATP-dependent 2-thiolation of cytidine in position 32 of tRNA, to form 2-thiocytidine (s(2)C32). The sulfur atoms are provided by the cysteine/cysteine desulfurase (IscS) system. The polypeptide is tRNA-cytidine(32) 2-sulfurtransferase (Nitrosomonas europaea (strain ATCC 19718 / CIP 103999 / KCTC 2705 / NBRC 14298)).